The chain runs to 737 residues: Translation initiation factor IF-2 (737 aa).

The tract at residues 55-152 (KKKEHIQHNK…PVPPRKNKPL (98 aa)) is disordered. The segment covering 60 to 70 (IQHNKNKDNFH) has biased composition (basic and acidic residues). Residues 88-98 (KNVHKNNRKRS) are compositionally biased toward basic residues. Positions 105-121 (NNNAKNGQRNNRNNRSN) are enriched in low complexity. Over residues 122–131 (NKFKNKRNNN) the composition is skewed to basic residues. Residues 132–142 (NKRNNNFKKGN) are compositionally biased toward low complexity. Positions 238–407 (KRPPVVTIMG…LLEAEMLELH (170 aa)) constitute a tr-type G domain. The interval 247 to 254 (GHVDHGKT) is G1. 247–254 (GHVDHGKT) provides a ligand contact to GTP. Residues 272-276 (GITQH) are G2. Residues 293–296 (DTPG) form a G3 region. Residues 293–297 (DTPGH) and 347–350 (NKID) contribute to the GTP site. Residues 347–350 (NKID) are G4. The tract at residues 383-385 (SAK) is G5.

This sequence belongs to the TRAFAC class translation factor GTPase superfamily. Classic translation factor GTPase family. IF-2 subfamily.

It localises to the cytoplasm. One of the essential components for the initiation of protein synthesis. Protects formylmethionyl-tRNA from spontaneous hydrolysis and promotes its binding to the 30S ribosomal subunits. Also involved in the hydrolysis of GTP during the formation of the 70S ribosomal complex. The chain is Translation initiation factor IF-2 from Ligilactobacillus salivarius (strain UCC118) (Lactobacillus salivarius).